A 1005-amino-acid polypeptide reads, in one-letter code: Probable histidine kinase 4 (1005 aa).

The Cytoplasmic segment spans residues 1–37 (MGVGGGGGGGGGEAAAAVAVEGDEAGKGRRWWRVKVK). The helical transmembrane segment at 38–58 (LSTVAVVAWVLASAALWAGLH) threads the bilayer. The Extracellular portion of the chain corresponds to 59–333 (WRFRRAALHK…YRNKLHVSWS (275 aa)). In terms of domain architecture, CHASE spans 110 to 321 (HPPALDQDTF…GDPLRKHQMV (212 aa)). Residues 334-354 (AITTPSGVFVICMLVGYIIYA) traverse the membrane as a helical segment. Topologically, residues 355-1005 (AWSRYDNVKE…QKFLGPCVSS (651 aa)) are cytoplasmic. Residues 389–675 (TVSHEIRTPM…TFTFTAVLRR (287 aa)) form the Histidine kinase domain. Phosphohistidine; by autocatalysis is present on His-392. 2 consecutive Response regulatory domains span residues 700–829 (SALL…FQAL) and 862–999 (NILV…QKFL). 4-aspartylphosphate is present on Asp-912.

In terms of processing, activation probably requires a transfer of a phosphate group between a His in the transmitter domain and an Asp of the receiver domain. In terms of tissue distribution, highly expressed in young leaves and spikelets, and at lower levels in roots, mature leaves and stems.

It is found in the cell membrane. It carries out the reaction ATP + protein L-histidine = ADP + protein N-phospho-L-histidine.. In terms of biological role, cytokinin receptor related to bacterial two-component regulators. Functions as a histidine kinase and transmits the stress signal to a downstream MAPK cascade. This is Probable histidine kinase 4 from Oryza sativa subsp. japonica (Rice).